The sequence spans 548 residues: Glucose-6-phosphate isomerase (548 aa).

E355 functions as the Proton donor in the catalytic mechanism. Catalysis depends on residues H386 and K514.

This sequence belongs to the GPI family.

It is found in the cytoplasm. The catalysed reaction is alpha-D-glucose 6-phosphate = beta-D-fructose 6-phosphate. It participates in carbohydrate biosynthesis; gluconeogenesis. Its pathway is carbohydrate degradation; glycolysis; D-glyceraldehyde 3-phosphate and glycerone phosphate from D-glucose: step 2/4. Catalyzes the reversible isomerization of glucose-6-phosphate to fructose-6-phosphate. The chain is Glucose-6-phosphate isomerase from Proteus mirabilis (strain HI4320).